Here is a 178-residue protein sequence, read N- to C-terminus: Large ribosomal subunit protein uL6 (178 aa).

The protein belongs to the universal ribosomal protein uL6 family. In terms of assembly, part of the 50S ribosomal subunit.

In terms of biological role, this protein binds to the 23S rRNA, and is important in its secondary structure. It is located near the subunit interface in the base of the L7/L12 stalk, and near the tRNA binding site of the peptidyltransferase center. In Corynebacterium aurimucosum (strain ATCC 700975 / DSM 44827 / CIP 107346 / CN-1) (Corynebacterium nigricans), this protein is Large ribosomal subunit protein uL6.